The chain runs to 256 residues: uncharacterized protein (256 aa).

Transmembrane regions (helical) follow at residues 42-62 (LIAL…IWFF), 73-93 (FFTL…LIFL), and 108-128 (WLFL…WLIV).

The protein resides in the cell membrane. This is an uncharacterized protein from Mycoplasma genitalium (strain ATCC 33530 / DSM 19775 / NCTC 10195 / G37) (Mycoplasmoides genitalium).